A 524-amino-acid polypeptide reads, in one-letter code: Phosphoenolpyruvate carboxykinase (ATP) (524 aa).

Substrate-binding residues include arginine 52, tyrosine 188, and lysine 194. Residues lysine 194, histidine 213, and 229–237 (GLSGTGKTT) contribute to the ATP site. Lysine 194 and histidine 213 together coordinate Mn(2+). Aspartate 250 serves as a coordination point for Mn(2+). Residues glutamate 278, arginine 314, and threonine 439 each coordinate ATP. A substrate-binding site is contributed by arginine 314.

It belongs to the phosphoenolpyruvate carboxykinase (ATP) family. The cofactor is Mn(2+).

The protein localises to the cytoplasm. The catalysed reaction is oxaloacetate + ATP = phosphoenolpyruvate + ADP + CO2. It participates in carbohydrate biosynthesis; gluconeogenesis. Its function is as follows. Involved in the gluconeogenesis. Catalyzes the conversion of oxaloacetate (OAA) to phosphoenolpyruvate (PEP) through direct phosphoryl transfer between the nucleoside triphosphate and OAA. In Campylobacter jejuni (strain RM1221), this protein is Phosphoenolpyruvate carboxykinase (ATP).